Reading from the N-terminus, the 62-residue chain is uncharacterized protein (62 aa).

Residues 28–61 (KIESTHPEIAKKLKEAAEKYREVEEILKKAVDMV) are a coiled coil.

This is an uncharacterized protein from Archaeoglobus fulgidus (strain ATCC 49558 / DSM 4304 / JCM 9628 / NBRC 100126 / VC-16).